We begin with the raw amino-acid sequence, 198 residues long: Holliday junction resolvase RecU (198 aa).

The Mg(2+) site is built by T83, D85, E98, and Q117.

The protein belongs to the RecU family. Requires Mg(2+) as cofactor.

The protein localises to the cytoplasm. It catalyses the reaction Endonucleolytic cleavage at a junction such as a reciprocal single-stranded crossover between two homologous DNA duplexes (Holliday junction).. In terms of biological role, endonuclease that resolves Holliday junction intermediates in genetic recombination. Cleaves mobile four-strand junctions by introducing symmetrical nicks in paired strands. Promotes annealing of linear ssDNA with homologous dsDNA. Required for DNA repair, homologous recombination and chromosome segregation. This is Holliday junction resolvase RecU from Streptococcus thermophilus (strain CNRZ 1066).